The following is a 302-amino-acid chain: Cell division protein FtsQ (302 aa).

The Cytoplasmic segment spans residues Met1–Arg43. A helical transmembrane segment spans residues Ala44 to Gly64. Residues Arg65–Gly302 are Periplasmic-facing. One can recognise a POTRA domain in the interval Phe89–Arg156.

Belongs to the FtsQ/DivIB family. FtsQ subfamily.

Its subcellular location is the cell inner membrane. Its function is as follows. Essential cell division protein. This Ketogulonicigenium vulgare (strain Y25) protein is Cell division protein FtsQ.